The following is a 736-amino-acid chain: Ethylene receptor 2 (736 aa).

3 helical membrane passes run 22 to 42 (ISDFFIAVAYFSIPIELVYFV), 53 to 73 (VLVQFGAFIVLCGATHLINLW), and 94 to 114 (AAVSCATAVMLVHIIPDLLSV). Cu cation is bound by residues cysteine 64 and histidine 68. Residues 157 to 305 (DRHTILKTTL…VVADQVAVAL (149 aa)) form the GAF domain. Positions 348-585 (VMNHEMRTPM…TAIFIVKLGI (238 aa)) constitute a Histidine kinase domain. Histidine 351 carries the phosphohistidine; by autocatalysis modification. Residues 613–730 (KVLVMDDNGF…KMRSVLSGLL (118 aa)) form the Response regulatory domain. Aspartate 661 is modified (4-aspartylphosphate).

This sequence belongs to the ethylene receptor family. As to quaternary structure, homodimer; disulfide-linked. Cu cation is required as a cofactor. In terms of processing, activation probably requires a transfer of a phosphate group between a His in the transmitter domain and an Asp of the receiver domain. As to expression, leaves, flowers and fruits.

The protein localises to the endoplasmic reticulum membrane. The enzyme catalyses ATP + protein L-histidine = ADP + protein N-phospho-L-histidine.. May act early in the ethylene signal transduction pathway, possibly as an ethylene receptor, or as a regulator of the pathway. This Solanum lycopersicum (Tomato) protein is Ethylene receptor 2 (ETR2).